The primary structure comprises 275 residues: Glucan endo-1,3-beta-glucosidase, acidic isoform PR-N (275 aa).

Glu196 acts as the Nucleophile in catalysis.

It belongs to the glycosyl hydrolase 17 family. Post-translationally, the N-terminus is blocked.

The protein resides in the secreted. It localises to the extracellular space. It catalyses the reaction Hydrolysis of (1-&gt;3)-beta-D-glucosidic linkages in (1-&gt;3)-beta-D-glucans.. Its function is as follows. Implicated in the defense of plants against pathogens. In Nicotiana tabacum (Common tobacco), this protein is Glucan endo-1,3-beta-glucosidase, acidic isoform PR-N (PRN).